Here is a 237-residue protein sequence, read N- to C-terminus: MDRPRFKRILLKLSGEVLMGQGQFGIDPETVARVAREIADVATHYELCLVVGGGNIFRGLAAAAKGFDRTSADYMGMLATVMNALAVQNALEQIGVDTRVQSAIPMSTVCEPFIRRRAERHLEKGRIVIFAAGTGNPYFTTDSAAALRAAEMGCDALFKGTSVDGVYNADPKKDPTAIRYETVTFNRVLADDLKVMDASAVALCRDNNIPIVVFNIREQGNLARVLAGSGTATTVQN.

12–15 contributes to the ATP binding site; the sequence is KLSG. Glycine 53 serves as a coordination point for UMP. ATP contacts are provided by glycine 54 and arginine 58. Residues aspartate 73 and 134 to 141 contribute to the UMP site; that span reads TGNPYFTT. Positions 161, 167, and 170 each coordinate ATP.

This sequence belongs to the UMP kinase family. Homohexamer.

It localises to the cytoplasm. It catalyses the reaction UMP + ATP = UDP + ADP. It participates in pyrimidine metabolism; CTP biosynthesis via de novo pathway; UDP from UMP (UMPK route): step 1/1. Its activity is regulated as follows. Inhibited by UTP. Functionally, catalyzes the reversible phosphorylation of UMP to UDP. In Rhizorhabdus wittichii (strain DSM 6014 / CCUG 31198 / JCM 15750 / NBRC 105917 / EY 4224 / RW1) (Sphingomonas wittichii), this protein is Uridylate kinase.